The sequence spans 390 residues: GTPase Obg (390 aa).

Positions 1–159 (MKFVDEASIL…RDLMLELMLL (159 aa)) constitute an Obg domain. Positions 127-147 (NTRFKSSVNRTPRQKTMGTPG) are disordered. Polar residues predominate over residues 129-143 (RFKSSVNRTPRQKTM). One can recognise an OBG-type G domain in the interval 160-333 (ADVGMLGMPN…LCWDVMTFII (174 aa)). Residues 166-173 (GMPNAGKS), 191-195 (FTTLV), 213-216 (DIPG), 283-286 (NKID), and 314-316 (SAA) each bind GTP. Residues Ser173 and Thr193 each coordinate Mg(2+).

The protein belongs to the TRAFAC class OBG-HflX-like GTPase superfamily. OBG GTPase family. In terms of assembly, monomer. Mg(2+) serves as cofactor.

It localises to the cytoplasm. Functionally, an essential GTPase which binds GTP, GDP and possibly (p)ppGpp with moderate affinity, with high nucleotide exchange rates and a fairly low GTP hydrolysis rate. Plays a role in control of the cell cycle, stress response, ribosome biogenesis and in those bacteria that undergo differentiation, in morphogenesis control. In Citrobacter koseri (strain ATCC BAA-895 / CDC 4225-83 / SGSC4696), this protein is GTPase Obg.